A 206-amino-acid chain; its full sequence is Proteasome subunit beta 2 (206 aa).

Positions 1–7 (MREAVSK) are cleaved as a propeptide — removed in mature form; by autocatalysis. The active-site Nucleophile is Thr8.

It belongs to the peptidase T1B family. In terms of assembly, the 20S proteasome core is composed of 14 alpha and 14 beta subunits that assemble into four stacked heptameric rings, resulting in a barrel-shaped structure. The two inner rings, each composed of seven catalytic beta subunits, are sandwiched by two outer rings, each composed of seven alpha subunits. The catalytic chamber with the active sites is on the inside of the barrel. Has a gated structure, the ends of the cylinder being occluded by the N-termini of the alpha-subunits. Is capped at one or both ends by the proteasome regulatory ATPase, PAN.

It is found in the cytoplasm. The catalysed reaction is Cleavage of peptide bonds with very broad specificity.. With respect to regulation, the formation of the proteasomal ATPase PAN-20S proteasome complex, via the docking of the C-termini of PAN into the intersubunit pockets in the alpha-rings, triggers opening of the gate for substrate entry. Interconversion between the open-gate and close-gate conformations leads to a dynamic regulation of the 20S proteasome proteolysis activity. Its function is as follows. Component of the proteasome core, a large protease complex with broad specificity involved in protein degradation. The sequence is that of Proteasome subunit beta 2 from Desulfurococcus amylolyticus (strain DSM 18924 / JCM 16383 / VKM B-2413 / 1221n) (Desulfurococcus kamchatkensis).